The primary structure comprises 143 residues: Sporulation-specific protein 73 (143 aa).

Belongs to the SPO73 family. In terms of assembly, interacts with SPO71.

Its subcellular location is the cytoplasm. It localises to the prospore membrane. Its function is as follows. Required for spore wall assembly and ascus formation. Involved in the formation and elongation of prospore membranes. The protein is Sporulation-specific protein 73 of Saccharomyces cerevisiae (strain ATCC 204508 / S288c) (Baker's yeast).